The sequence spans 312 residues: Malate dehydrogenase (312 aa).

NAD(+) contacts are provided by residues 7-13 (GAAGGIG) and D34. Residues R81 and R87 each contribute to the substrate site. Residues N94 and 117–119 (ITN) contribute to the NAD(+) site. Substrate-binding residues include N119 and R153. The active-site Proton acceptor is H177. M227 contributes to the NAD(+) binding site.

It belongs to the LDH/MDH superfamily. MDH type 1 family. Homodimer.

The enzyme catalyses (S)-malate + NAD(+) = oxaloacetate + NADH + H(+). In terms of biological role, catalyzes the reversible oxidation of malate to oxaloacetate. The polypeptide is Malate dehydrogenase (Escherichia coli (strain SE11)).